The primary structure comprises 511 residues: 2-isopropylmalate synthase (511 aa).

In terms of domain architecture, Pyruvate carboxyltransferase spans 5–267 (LIIFDTTLRD…DTNIDTMHIL (263 aa)). Mn(2+)-binding residues include Asp-14, His-202, His-204, and Asn-238. Residues 393–511 (KLVSLKVCTE…TVTNKAHPQI (119 aa)) are regulatory domain.

It belongs to the alpha-IPM synthase/homocitrate synthase family. LeuA type 1 subfamily. As to quaternary structure, homodimer. Mn(2+) serves as cofactor.

It is found in the cytoplasm. The enzyme catalyses 3-methyl-2-oxobutanoate + acetyl-CoA + H2O = (2S)-2-isopropylmalate + CoA + H(+). Its pathway is amino-acid biosynthesis; L-leucine biosynthesis; L-leucine from 3-methyl-2-oxobutanoate: step 1/4. Its function is as follows. Catalyzes the condensation of the acetyl group of acetyl-CoA with 3-methyl-2-oxobutanoate (2-ketoisovalerate) to form 3-carboxy-3-hydroxy-4-methylpentanoate (2-isopropylmalate). The chain is 2-isopropylmalate synthase from Vesicomyosocius okutanii subsp. Calyptogena okutanii (strain HA).